Consider the following 161-residue polypeptide: Eukaryotic translation initiation factor 5A-1 (161 aa).

Lys54 bears the Hypusine mark.

This sequence belongs to the eIF-5A family. In terms of processing, lys-54 undergoes hypusination, a unique post-translational modification that consists in the addition of a butylamino group from spermidine to lysine side chain, leading to the formation of the unusual amino acid hypusine. eIF-5As are the only known proteins to undergo this modification, which is essential for their function. Expressed specifically in the germline in the distal region of gonads where germ cells actively proliferate.

It localises to the cytoplasm. Functionally, translation factor that promotes translation elongation and termination, particularly upon ribosome stalling at specific amino acid sequence contexts. Binds between the exit (E) and peptidyl (P) site of the ribosome and promotes rescue of stalled ribosome: specifically required for efficient translation of polyproline-containing peptides as well as other motifs that stall the ribosome. Acts as a ribosome quality control (RQC) cofactor by joining the RQC complex to facilitate peptidyl transfer during CAT tailing step. Required for mitotic germ cell proliferation, gametogenesis after entry into meiosis, and localization of the P granule component pgl-1 on P granules. The polypeptide is Eukaryotic translation initiation factor 5A-1 (iff-1) (Caenorhabditis elegans).